The sequence spans 1161 residues: Mitogen-activated protein kinase kinase kinase (1161 aa).

The 65-residue stretch at 56–120 (GDGSLWTALY…PKDFVTDEDP (65 aa)) folds into the SH3 domain. Residues 142-402 (LDIKEVIGSG…KEILKQLESI (261 aa)) form the Protein kinase domain. ATP contacts are provided by residues 148-156 (IGSGGFCKV) and Lys-169. Asp-264 (proton acceptor) is an active-site residue. Phosphothreonine; by autocatalysis is present on Thr-300. Residue Ser-304 is modified to Phosphoserine; by autocatalysis. Leucine-zipper stretches follow at residues 426 to 447 (IAGV…EEQL) and 461 to 482 (LKIR…ELVM). Phosphoserine is present on residues Ser-525 and Ser-560. Disordered stretches follow at residues 560–615 (SQLS…GSGG) and 658–678 (TTNN…NQLN). The segment covering 571–583 (AQTSTHSSFSKSA) has biased composition (polar residues). Over residues 591 to 601 (QQQNQQQVASL) the composition is skewed to low complexity. Residues Ser-685, Ser-773, and Ser-792 each carry the phosphoserine modification. The segment at 790–830 (GNSPAVGRKKHSLDSSSHHPPANGSNSFALPNQLTLPSEDN) is disordered. The span at 812–830 (NGSNSFALPNQLTLPSEDN) shows a compositional bias: polar residues. At Thr-862 the chain carries Phosphothreonine. 3 disordered regions span residues 988 to 1014 (RSAS…EAVN), 1045 to 1093 (EQRQ…SAGS), and 1137 to 1161 (GGSS…LERC). Over residues 989-1010 (SASPSLSSSSTTASASPSIAST) the composition is skewed to low complexity. Phosphoserine is present on Ser-993. Basic residues predominate over residues 1052-1063 (NQKKQRPKHITK). Residues 1073–1086 (GQHHEHDDHNDPQH) show a composition bias toward basic and acidic residues. Residues 1150–1161 (PQTQSCEQLERC) are compositionally biased toward polar residues.

It belongs to the protein kinase superfamily. STE Ser/Thr protein kinase family. MAP kinase kinase kinase subfamily. Homodimer. The cofactor is Mg(2+). Autophosphorylation on serine and threonine residues within the activation loop plays a role in enzyme activation. As to expression, expressed both maternally and zygotically. Expressed uniformly in large quantities in the early embryo (stages 1-4). In the late embryo, expression is ubiquitous, but expression levels are dramatically reduced. Expressed in the adult head and thorax, and in S2 cells.

It catalyses the reaction L-seryl-[protein] + ATP = O-phospho-L-seryl-[protein] + ADP + H(+). The enzyme catalyses L-threonyl-[protein] + ATP = O-phospho-L-threonyl-[protein] + ADP + H(+). Its activity is regulated as follows. Homodimerization via the leucine zipper domains is required for autophosphorylation and subsequent activation. Activated by C6-ceramide. Activates the JUN N-terminal pathway during dorsal closure. In Drosophila melanogaster (Fruit fly), this protein is Mitogen-activated protein kinase kinase kinase.